A 429-amino-acid chain; its full sequence is Adenylosuccinate synthetase (429 aa).

GTP-binding positions include 12–18 (GDEGKGK) and 40–42 (GHT). The active-site Proton acceptor is the Asp13. The Mg(2+) site is built by Asp13 and Gly40. IMP is bound by residues 13–16 (DEGK), 38–41 (NAGH), Thr129, Arg143, Gln223, Thr238, and Arg302. The active-site Proton donor is the His41. 298–304 (TVTGRKR) contributes to the substrate binding site. GTP is bound by residues Arg304, 330–332 (KLD), and 412–414 (STS).

It belongs to the adenylosuccinate synthetase family. As to quaternary structure, homodimer. Requires Mg(2+) as cofactor.

It is found in the cytoplasm. It carries out the reaction IMP + L-aspartate + GTP = N(6)-(1,2-dicarboxyethyl)-AMP + GDP + phosphate + 2 H(+). Its pathway is purine metabolism; AMP biosynthesis via de novo pathway; AMP from IMP: step 1/2. Plays an important role in the de novo pathway of purine nucleotide biosynthesis. Catalyzes the first committed step in the biosynthesis of AMP from IMP. This Rhizorhabdus wittichii (strain DSM 6014 / CCUG 31198 / JCM 15750 / NBRC 105917 / EY 4224 / RW1) (Sphingomonas wittichii) protein is Adenylosuccinate synthetase.